Here is a 155-residue protein sequence, read N- to C-terminus: uncharacterized protein (155 aa).

Residues 6 to 155 (TCVRNARLAD…CDEIAMVKTL (150 aa)) form the N-acetyltransferase domain.

This sequence belongs to the acetyltransferase family.

This is an uncharacterized protein from Chlorobaculum tepidum (strain ATCC 49652 / DSM 12025 / NBRC 103806 / TLS) (Chlorobium tepidum).